We begin with the raw amino-acid sequence, 172 residues long: Large ribosomal subunit protein uL10 (172 aa).

Belongs to the universal ribosomal protein uL10 family. As to quaternary structure, part of the ribosomal stalk of the 50S ribosomal subunit. The N-terminus interacts with L11 and the large rRNA to form the base of the stalk. The C-terminus forms an elongated spine to which L12 dimers bind in a sequential fashion forming a multimeric L10(L12)X complex.

Forms part of the ribosomal stalk, playing a central role in the interaction of the ribosome with GTP-bound translation factors. The sequence is that of Large ribosomal subunit protein uL10 from Rhodospirillum rubrum (strain ATCC 11170 / ATH 1.1.1 / DSM 467 / LMG 4362 / NCIMB 8255 / S1).